Here is a 132-residue protein sequence, read N- to C-terminus: Holo-[acyl-carrier-protein] synthase (132 aa).

2 residues coordinate Mg(2+): D8 and E62.

It belongs to the P-Pant transferase superfamily. AcpS family. The cofactor is Mg(2+).

It is found in the cytoplasm. The catalysed reaction is apo-[ACP] + CoA = holo-[ACP] + adenosine 3',5'-bisphosphate + H(+). Transfers the 4'-phosphopantetheine moiety from coenzyme A to a Ser of acyl-carrier-protein. This is Holo-[acyl-carrier-protein] synthase from Methylibium petroleiphilum (strain ATCC BAA-1232 / LMG 22953 / PM1).